A 727-amino-acid polypeptide reads, in one-letter code: E3 ubiquitin-protein ligase LRSAM1 (727 aa).

6 LRR repeats span residues 30–51 (ADDILDISKCELSEIPFGAFAT), 56–77 (QKKVLIVHTNHLTSLLPKSCSL), 82–103 (TIKVLDLHENQLTALPDDMGQL), 105–126 (VLQVLNVERNQLTHLPRSIGNL), 128–150 (QLQTLNVKDNKLKELPDTLGELR), and 151–172 (SLRTLDISENEIQRLPQMLAHV). The disordered stretch occupies residues 227–248 (GAENTQDSPDGPASRFSREEAE). Serine 234 carries the phosphoserine modification. Coiled-coil stretches lie at residues 241–382 (RFSR…NLRQ) and 469–547 (RQIR…QENY). The SAM domain occupies 569–632 (GMERRLVALL…LRRAQDLLAV (64 aa)). At serine 604 the chain carries Phosphoserine. Short sequence motifs (PTAP motif) lie at residues 653–656 (PTAP) and 665–668 (PSAP). The segment at 679 to 714 (CVVCLEREAQMVFLTCGHVCCCQQCCQPLRTCPLCR) adopts an RING-type zinc-finger fold.

As to quaternary structure, interacts with TSG101. Interacts with PHF23. Interacts with FUS. In terms of processing, ubiquitination promoted by PHF23 leads to proteasomal degradation. Widely expressed.

It is found in the cytoplasm. The catalysed reaction is S-ubiquitinyl-[E2 ubiquitin-conjugating enzyme]-L-cysteine + [acceptor protein]-L-lysine = [E2 ubiquitin-conjugating enzyme]-L-cysteine + N(6)-ubiquitinyl-[acceptor protein]-L-lysine.. It participates in protein modification; protein ubiquitination. Functionally, E3 ubiquitin-protein ligase that mediates monoubiquitination of TSG101 at multiple sites, leading to inactivate the ability of TSG101 to sort endocytic (EGF receptors) and exocytic (viral proteins) cargos. Bacterial recognition protein that defends the cytoplasm from invasive pathogens. Localizes to several intracellular bacterial pathogens and generates the bacteria-associated ubiquitin signal leading to autophagy-mediated intracellular bacteria degradation (xenophagy). The chain is E3 ubiquitin-protein ligase LRSAM1 from Mus musculus (Mouse).